A 303-amino-acid polypeptide reads, in one-letter code: UDP-3-O-acyl-N-acetylglucosamine deacetylase (303 aa).

Residues His-78, His-237, and Asp-241 each contribute to the Zn(2+) site. His-264 (proton donor) is an active-site residue.

It belongs to the LpxC family. Zn(2+) serves as cofactor.

The enzyme catalyses a UDP-3-O-[(3R)-3-hydroxyacyl]-N-acetyl-alpha-D-glucosamine + H2O = a UDP-3-O-[(3R)-3-hydroxyacyl]-alpha-D-glucosamine + acetate. Its pathway is glycolipid biosynthesis; lipid IV(A) biosynthesis; lipid IV(A) from (3R)-3-hydroxytetradecanoyl-[acyl-carrier-protein] and UDP-N-acetyl-alpha-D-glucosamine: step 2/6. Its function is as follows. Catalyzes the hydrolysis of UDP-3-O-myristoyl-N-acetylglucosamine to form UDP-3-O-myristoylglucosamine and acetate, the committed step in lipid A biosynthesis. In Pseudomonas syringae pv. tomato (strain ATCC BAA-871 / DC3000), this protein is UDP-3-O-acyl-N-acetylglucosamine deacetylase.